The following is a 166-amino-acid chain: 3-isopropylmalate dehydratase small subunit (166 aa).

Belongs to the LeuD family. LeuD type 2 subfamily. As to quaternary structure, heterodimer of LeuC and LeuD.

It carries out the reaction (2R,3S)-3-isopropylmalate = (2S)-2-isopropylmalate. It functions in the pathway amino-acid biosynthesis; L-leucine biosynthesis; L-leucine from 3-methyl-2-oxobutanoate: step 2/4. In terms of biological role, catalyzes the isomerization between 2-isopropylmalate and 3-isopropylmalate, via the formation of 2-isopropylmaleate. In Heliobacterium modesticaldum (strain ATCC 51547 / Ice1), this protein is 3-isopropylmalate dehydratase small subunit.